The following is an 874-amino-acid chain: Coatomer subunit gamma-1 (874 aa).

Over residues 1-11 the composition is skewed to basic and acidic residues; that stretch reads MLKKFDKKDEE. Positions 1–21 are disordered; it reads MLKKFDKKDEESGGGSNPLQH. HEAT repeat units lie at residues 64 to 101, 283 to 320, 322 to 355, and 356 to 392; these read TEAT…IAED, KELA…KHPS, VTAC…GSES, and SIDR…KYPR. A Phosphothreonine modification is found at threonine 594. Residues 609–874 are interaction with ZNF289/ARFGAP2; sequence RQEIFQEQLA…PVDIILASVG (266 aa).

Belongs to the COPG family. Oligomeric complex that consists of at least the alpha, beta, beta', gamma, delta, epsilon and zeta subunits. Interacts with ZNF289/ARFGAP2 through its C-terminal appendage domain. Interacts with EGFR upon EGF treatment; interaction is essential for regulation of EGF-dependent nuclear transport of EGFR by retrograde trafficking from the Golgi to the ER. The coatomer interacts with KDEL receptors; the interaction is important for retrograde trafficking of KDEL-bearing proteins from the Golgi to the endoplasmic reticulum. Interacts with COPB1. Interacts with TMED10 (via C-terminus). Interacts with TMED2, TMED3, TMED7 and TMED9.

The protein localises to the cytoplasm. Its subcellular location is the cytosol. It localises to the golgi apparatus membrane. The protein resides in the cytoplasmic vesicle. It is found in the COPI-coated vesicle membrane. Its function is as follows. The coatomer is a cytosolic protein complex that binds to dilysine motifs and reversibly associates with Golgi non-clathrin-coated vesicles, which further mediate biosynthetic protein transport from the ER, via the Golgi up to the trans Golgi network. Coatomer complex is required for budding from Golgi membranes, and is essential for the retrograde Golgi-to-ER transport of dilysine-tagged proteins. In mammals, the coatomer can only be recruited by membranes associated to ADP-ribosylation factors (ARFs), which are small GTP-binding proteins; the complex also influences the Golgi structural integrity, as well as the processing, activity, and endocytic recycling of LDL receptors. Required for limiting lipid storage in lipid droplets. Involved in lipid homeostasis by regulating the presence of perilipin family members PLIN2 and PLIN3 at the lipid droplet surface and promoting the association of adipocyte triglyceride lipase (PNPLA2) with the lipid droplet surface to mediate lipolysis. This Mus musculus (Mouse) protein is Coatomer subunit gamma-1 (Copg1).